Here is an 88-residue protein sequence, read N- to C-terminus: Small ribosomal subunit protein bS16c (88 aa).

Component of the chloroplast small ribosomal subunit (SSU). Mature 70S chloroplast ribosomes of higher plants consist of a small (30S) and a large (50S) subunit. The 30S small subunit contains 1 molecule of ribosomal RNA (16S rRNA) and 24 different proteins. The 50S large subunit contains 3 rRNA molecules (23S, 5S and 4.5S rRNA) and 33 different proteins.

Its subcellular location is the plastid. The protein localises to the chloroplast. Component of the chloroplast ribosome (chloro-ribosome), a dedicated translation machinery responsible for the synthesis of chloroplast genome-encoded proteins, including proteins of the transcription and translation machinery and components of the photosynthetic apparatus. In Spinacia oleracea (Spinach), this protein is Small ribosomal subunit protein bS16c.